Here is a 1342-residue protein sequence, read N- to C-terminus: DNA-directed RNA polymerase subunit beta (1342 aa).

The protein belongs to the RNA polymerase beta chain family. As to quaternary structure, the RNAP catalytic core consists of 2 alpha, 1 beta, 1 beta' and 1 omega subunit. When a sigma factor is associated with the core the holoenzyme is formed, which can initiate transcription.

It catalyses the reaction RNA(n) + a ribonucleoside 5'-triphosphate = RNA(n+1) + diphosphate. In terms of biological role, DNA-dependent RNA polymerase catalyzes the transcription of DNA into RNA using the four ribonucleoside triphosphates as substrates. In Serratia proteamaculans (strain 568), this protein is DNA-directed RNA polymerase subunit beta.